A 341-amino-acid chain; its full sequence is Tetraacyldisaccharide 4'-kinase (341 aa).

54 to 61 contributes to the ATP binding site; it reads TVGGAGKT.

This sequence belongs to the LpxK family.

The enzyme catalyses a lipid A disaccharide + ATP = a lipid IVA + ADP + H(+). The protein operates within glycolipid biosynthesis; lipid IV(A) biosynthesis; lipid IV(A) from (3R)-3-hydroxytetradecanoyl-[acyl-carrier-protein] and UDP-N-acetyl-alpha-D-glucosamine: step 6/6. Functionally, transfers the gamma-phosphate of ATP to the 4'-position of a tetraacyldisaccharide 1-phosphate intermediate (termed DS-1-P) to form tetraacyldisaccharide 1,4'-bis-phosphate (lipid IVA). The sequence is that of Tetraacyldisaccharide 4'-kinase from Brucella suis (strain ATCC 23445 / NCTC 10510).